Reading from the N-terminus, the 88-residue chain is Putative membrane protein insertion efficiency factor (88 aa).

The interval 68–88 is disordered; that stretch reads VPPPNSDTRARGEADARSHRL. Residues 75-88 show a composition bias toward basic and acidic residues; it reads TRARGEADARSHRL.

Belongs to the UPF0161 family.

It is found in the cell inner membrane. Could be involved in insertion of integral membrane proteins into the membrane. The sequence is that of Putative membrane protein insertion efficiency factor from Burkholderia ambifaria (strain MC40-6).